The primary structure comprises 410 residues: Single Ig IL-1-related receptor (410 aa).

At Met1–His118 the chain is on the extracellular side. The Ig-like C2-type domain maps to Pro9–Thr109. 4 N-linked (GlcNAc...) asparagine glycosylation sites follow: Asn31, Asn73, Asn86, and Asn102. Residues Cys32 and Cys98 are joined by a disulfide bond. The helical; Signal-anchor for type III membrane protein transmembrane segment at Val119 to Tyr139 threads the bilayer. The Cytoplasmic segment spans residues Val140 to Met410. One can recognise a TIR domain in the interval Lys163–Leu307. A disordered region spans residues Glu340–Leu390. Ser383 carries the post-translational modification Phosphoserine.

It belongs to the interleukin-1 receptor family. Interacts with IL1R1, IRAK1, TLR4, TLR5, TLR9 and TRAF6. Upon IL-1 stimulation found in a complex at least composed of IL1R1, SIGIRR, MYD88, IRAK1 and TRAF6. Upon stimulation with LPC found in a complex at least composed of TLR4, SIG1IR, MYD88, IRAK1 and TRAF6. Interacts with PALM3. As to expression, mainly expressed in epithelial tissues such as kidney, lung and gut.

It is found in the membrane. Functionally, acts as a negative regulator of the Toll-like and IL-1R receptor signaling pathways. Attenuates the recruitment of receptor-proximal signaling components to the TLR4 receptor, probably through an TIR-TIR domain interaction with TLR4. Through its extracellular domain interferes with the heterodimerization of Il1R1 and IL1RAP. This is Single Ig IL-1-related receptor (SIGIRR) from Homo sapiens (Human).